The primary structure comprises 498 residues: ATP synthase subunit beta, chloroplastic (498 aa).

At Thr-6 the chain carries Phosphothreonine. Ser-13 is modified (phosphoserine). ATP is bound at residue 172 to 179 (GGAGVGKT).

Belongs to the ATPase alpha/beta chains family. F-type ATPases have 2 components, CF(1) - the catalytic core - and CF(0) - the membrane proton channel. CF(1) has five subunits: alpha(3), beta(3), gamma(1), delta(1), epsilon(1). CF(0) has four main subunits: a(1), b(1), b'(1) and c(9-12).

Its subcellular location is the plastid. The protein resides in the chloroplast thylakoid membrane. It catalyses the reaction ATP + H2O + 4 H(+)(in) = ADP + phosphate + 5 H(+)(out). Functionally, produces ATP from ADP in the presence of a proton gradient across the membrane. The catalytic sites are hosted primarily by the beta subunits. The protein is ATP synthase subunit beta, chloroplastic of Nasturtium officinale (Watercress).